Consider the following 185-residue polypeptide: Ribosome-recycling factor (185 aa).

Belongs to the RRF family.

The protein resides in the cytoplasm. Its function is as follows. Responsible for the release of ribosomes from messenger RNA at the termination of protein biosynthesis. May increase the efficiency of translation by recycling ribosomes from one round of translation to another. In Coxiella burnetii (strain RSA 493 / Nine Mile phase I), this protein is Ribosome-recycling factor.